A 521-amino-acid chain; its full sequence is Importin subunit alpha-4 (521 aa).

Residues 1–29 (MAENPSLENHRIKSFKNKGRDVETMRRHR) form a disordered region. Ala-2 carries the N-acetylalanine modification. An IBB domain is found at 2–58 (AENPSLENHRIKSFKNKGRDVETMRRHRNEVTVELRKNKRDEHLLKKRNVPQEESLE). Positions 18-29 (KGRDVETMRRHR) are enriched in basic and acidic residues. The Nuclear localization signal signature appears at 43 to 52 (EHLLKKRNVP). Residues Ser-56 and Ser-60 each carry the phosphoserine modification. The stretch at 66 to 106 (FKAQNVTLEAILQNATSDNPVVQLSAVQAARKLLSSDRNPP) is one ARM 1; truncated repeat. ARM repeat units lie at residues 107 to 149 (IDDL…TSAQ), 150 to 194 (TQAV…CRDY), 195 to 233 (VISLGVVKPLLSFISPSIPITFLRNVTWVIVNLCRNKDP), 234 to 278 (PPPM…EQIQ), 279 to 318 (MVIDSGVVPFLVPLLSHQEVKVQTAALRAVGNIVTGTDEQ), 319 to 360 (TQVV…NQQQ), 361 to 400 (VQAVIDAGLIPMIIHQLAKGDFGTQKEAAWAISNLTISGR), and 401 to 443 (KDQV…IMAG). The interval 137–229 (WALTNIASGT…VTWVIVNLCR (93 aa)) is NLS binding site (major). The NLS binding site (minor) stretch occupies residues 306-394 (RAVGNIVTGT…QKEAAWAISN (89 aa)). An ARM 10; atypical repeat occupies 447 to 485 (STIAEIIEECGGLEKIEVLQQHENEDIYKLAFEIIDQYF). Tyr-484 carries the post-translational modification Phosphotyrosine.

This sequence belongs to the importin alpha family. Forms a complex with importin subunit beta-1. Interacts with DDX21. Interacts with NCBP1, NCBP2/CBP20 and NCBP3. Interacts with RCC1. Interacts with ZC3H11A. As to quaternary structure, (Microbial infection) Interacts with HIV-1 integrase; this interaction might play a role in nuclear import of HIV pre-integration complex. In terms of assembly, (Microbial infection) Interacts with influenza virus nucleoprotein; this interaction might play a role in nuclear import of viral genome. In terms of tissue distribution, ubiquitous. Highest levels in heart and skeletal muscle.

It localises to the cytoplasm. The protein resides in the nucleus. In terms of biological role, functions in nuclear protein import as an adapter protein for nuclear receptor KPNB1. Binds specifically and directly to substrates containing either a simple or bipartite NLS motif. Docking of the importin/substrate complex to the nuclear pore complex (NPC) is mediated by KPNB1 through binding to nucleoporin FxFG repeats and the complex is subsequently translocated through the pore by an energy requiring, Ran-dependent mechanism. At the nucleoplasmic side of the NPC, Ran binds to importin-beta and the three components separate and importin-alpha and -beta are re-exported from the nucleus to the cytoplasm where GTP hydrolysis releases Ran from importin. The directionality of nuclear import is thought to be conferred by an asymmetric distribution of the GTP- and GDP-bound forms of Ran between the cytoplasm and nucleus. In vitro, mediates the nuclear import of human cytomegalovirus UL84 by recognizing a non-classical NLS. Recognizes NLSs of influenza A virus nucleoprotein probably through ARM repeats 7-9. The polypeptide is Importin subunit alpha-4 (KPNA3) (Homo sapiens (Human)).